The primary structure comprises 115 residues: Transmembrane protein 14C (115 aa).

A run of 4 helical transmembrane segments spans residues 8–28 (LVPL…GGII), 33–53 (AGSV…GLGA), 63–83 (VWVF…RFYN), and 88–108 (MPAG…VAKI).

This sequence belongs to the TMEM14 family.

It localises to the mitochondrion membrane. Functionally, required for normal heme biosynthesis. The protein is Transmembrane protein 14C (Tmem14c) of Rattus norvegicus (Rat).